The primary structure comprises 475 residues: GlcNAc-binding protein A (475 aa).

Residues 1-27 (MPKLTQLSLVTLALTAGSTLVSQTASA) form the signal peptide. Residues 28–195 (HGYVVSPESR…SFYNAIDVNF (168 aa)) form the Chitin-binding type-4 domain. The 43-residue stretch at 426–468 (AGTKVLQPKTGKVYQCKPWPYNGYCVQWSPTATGFEPGIGNSW) folds into the Chitin-binding type-3 domain.

The protein belongs to the GbpA family.

It localises to the secreted. Its function is as follows. Probably interacts with GlcNAc residues. May promote attachment to both epithelial cell surfaces and chitin. In Shewanella oneidensis (strain ATCC 700550 / JCM 31522 / CIP 106686 / LMG 19005 / NCIMB 14063 / MR-1), this protein is GlcNAc-binding protein A.